The primary structure comprises 228 residues: Large ribosomal subunit protein bL25 (228 aa).

Residues Met-1–Asn-10 are compositionally biased toward polar residues. Disordered regions lie at residues Met-1–Leu-20 and Met-187–Lys-228. The span at Glu-202 to Lys-228 shows a compositional bias: basic and acidic residues.

It belongs to the bacterial ribosomal protein bL25 family. CTC subfamily. In terms of assembly, part of the 50S ribosomal subunit; part of the 5S rRNA/L5/L18/L25 subcomplex. Contacts the 5S rRNA. Binds to the 5S rRNA independently of L5 and L18.

Its function is as follows. This is one of the proteins that binds to the 5S RNA in the ribosome where it forms part of the central protuberance. This is Large ribosomal subunit protein bL25 from Pelagibacter ubique (strain HTCC1062).